The chain runs to 248 residues: Probable transcriptional regulatory protein PsycPRwf_1013 (248 aa).

Belongs to the TACO1 family.

It localises to the cytoplasm. The protein is Probable transcriptional regulatory protein PsycPRwf_1013 of Psychrobacter sp. (strain PRwf-1).